Reading from the N-terminus, the 351-residue chain is uncharacterized protein (351 aa).

Residues 1–61 (MNDKRKPSFQ…RDKQEVKETR (61 aa)) are disordered. Composition is skewed to basic and acidic residues over residues 16-38 (FQER…HFND) and 44-61 (RNEK…KETR).

It belongs to the class IV-like SAM-binding methyltransferase superfamily. RNA methyltransferase TrmH family.

This is an uncharacterized protein from Haemophilus influenzae (strain ATCC 51907 / DSM 11121 / KW20 / Rd).